The chain runs to 375 residues: Carbamoyl phosphate synthase small chain (375 aa).

The interval 1–186 (MRALLALEDG…LEPGGCAWVG (186 aa)) is CPSase. Residues Ser-45, Gly-238, and Gly-240 each coordinate L-glutamine. In terms of domain architecture, Glutamine amidotransferase type-1 spans 190 to 375 (RLVVYDFGIK…RNMVREAAGC (186 aa)). Residue Cys-265 is the Nucleophile of the active site. L-glutamine contacts are provided by Leu-266, Gln-269, Asn-307, Gly-309, and Phe-310. Active-site residues include His-348 and Glu-350.

This sequence belongs to the CarA family. Composed of two chains; the small (or glutamine) chain promotes the hydrolysis of glutamine to ammonia, which is used by the large (or ammonia) chain to synthesize carbamoyl phosphate. Tetramer of heterodimers (alpha,beta)4.

It catalyses the reaction hydrogencarbonate + L-glutamine + 2 ATP + H2O = carbamoyl phosphate + L-glutamate + 2 ADP + phosphate + 2 H(+). The catalysed reaction is L-glutamine + H2O = L-glutamate + NH4(+). The protein operates within amino-acid biosynthesis; L-arginine biosynthesis; carbamoyl phosphate from bicarbonate: step 1/1. It functions in the pathway pyrimidine metabolism; UMP biosynthesis via de novo pathway; (S)-dihydroorotate from bicarbonate: step 1/3. Functionally, small subunit of the glutamine-dependent carbamoyl phosphate synthetase (CPSase). CPSase catalyzes the formation of carbamoyl phosphate from the ammonia moiety of glutamine, carbonate, and phosphate donated by ATP, constituting the first step of 2 biosynthetic pathways, one leading to arginine and/or urea and the other to pyrimidine nucleotides. The small subunit (glutamine amidotransferase) binds and cleaves glutamine to supply the large subunit with the substrate ammonia. The polypeptide is Carbamoyl phosphate synthase small chain (Nitratidesulfovibrio vulgaris (strain ATCC 29579 / DSM 644 / CCUG 34227 / NCIMB 8303 / VKM B-1760 / Hildenborough) (Desulfovibrio vulgaris)).